Consider the following 804-residue polypeptide: Exo-1,4-beta-xylosidase xlnD (804 aa).

Positions 1–26 (MAHSMSRPVAATAAALLALALPQALA) are cleaved as a signal peptide. Residues asparagine 29, asparagine 124, asparagine 148, asparagine 242, and asparagine 251 are each glycosylated (N-linked (GlcNAc...) asparagine). The active site involves aspartate 315. Asparagine 357, asparagine 390, asparagine 413, asparagine 444, asparagine 455, asparagine 573, asparagine 665, asparagine 696, and asparagine 718 each carry an N-linked (GlcNAc...) asparagine glycan.

It belongs to the glycosyl hydrolase 3 family.

The protein localises to the secreted. The enzyme catalyses Hydrolysis of (1-&gt;4)-beta-D-xylans, to remove successive D-xylose residues from the non-reducing termini.. Its pathway is glycan degradation; xylan degradation. In terms of biological role, xylan 1,4-beta-xylosidase involved in the hydrolysis of xylan, a major structural heterogeneous polysaccharide found in plant biomass representing the second most abundant polysaccharide in the biosphere, after cellulose. This Aspergillus awamori (Black koji mold) protein is Exo-1,4-beta-xylosidase xlnD (xlnD).